The chain runs to 415 residues: Gamma-glutamyl phosphate reductase (415 aa).

Belongs to the gamma-glutamyl phosphate reductase family.

It localises to the cytoplasm. The enzyme catalyses L-glutamate 5-semialdehyde + phosphate + NADP(+) = L-glutamyl 5-phosphate + NADPH + H(+). The protein operates within amino-acid biosynthesis; L-proline biosynthesis; L-glutamate 5-semialdehyde from L-glutamate: step 2/2. Catalyzes the NADPH-dependent reduction of L-glutamate 5-phosphate into L-glutamate 5-semialdehyde and phosphate. The product spontaneously undergoes cyclization to form 1-pyrroline-5-carboxylate. The chain is Gamma-glutamyl phosphate reductase from Bacillus thuringiensis subsp. konkukian (strain 97-27).